The primary structure comprises 432 residues: Diaminopimelate decarboxylase (432 aa).

An N6-(pyridoxal phosphate)lysine modification is found at Lys66. Residues Gly248 and 290 to 293 (EPGR) contribute to the pyridoxal 5'-phosphate site. Positions 293, 330, and 334 each coordinate substrate. The active-site Proton donor is Cys361. 2 residues coordinate substrate: Glu362 and Tyr390. Position 390 (Tyr390) interacts with pyridoxal 5'-phosphate.

The protein belongs to the Orn/Lys/Arg decarboxylase class-II family. LysA subfamily. Homodimer. Pyridoxal 5'-phosphate is required as a cofactor.

It catalyses the reaction meso-2,6-diaminopimelate + H(+) = L-lysine + CO2. Its pathway is amino-acid biosynthesis; L-lysine biosynthesis via DAP pathway; L-lysine from DL-2,6-diaminopimelate: step 1/1. Functionally, specifically catalyzes the decarboxylation of meso-diaminopimelate (meso-DAP) to L-lysine. In Bacillus methanolicus, this protein is Diaminopimelate decarboxylase.